Consider the following 962-residue polypeptide: Translation initiation factor IF-2 (962 aa).

The tract at residues 99–366 (VKAAQTQAAP…KKGKKLKLEP (268 aa)) is disordered. Over residues 117-141 (DAAKARAEAAARAEARAKAEAEAAK) the composition is skewed to basic and acidic residues. Residues 145–155 (AKAGNKAKPAA) are compositionally biased toward low complexity. A compositionally biased stretch (basic and acidic residues) spans 173-216 (KPAEESKAEKAQADKMPSEKPAEPKEKAAKPKHERNGKGKDAKK). Low complexity predominate over residues 219 to 234 (KPAAPAVPQPVVSAEE). The span at 235 to 269 (QAQRDEEARRAAALRAHQEALLKEKQERQARREAM) shows a compositional bias: basic and acidic residues. Over residues 270-283 (KQQAEQQAKAAQEA) the composition is skewed to low complexity. Composition is skewed to basic and acidic residues over residues 314–327 (AKKE…DEGQ) and 338–354 (GGRD…ERVR). In terms of domain architecture, tr-type G spans 462–631 (PRPPVVTVMG…LLEAEVLELT (170 aa)). Residues 471–478 (GHVDHGKT) form a G1 region. 471 to 478 (GHVDHGKT) contacts GTP. The G2 stretch occupies residues 496–500 (GITQH). Positions 517-520 (DTPG) are G3. GTP-binding positions include 517–521 (DTPGH) and 571–574 (NKID). The interval 571-574 (NKID) is G4. A G5 region spans residues 607–609 (SAK).

It belongs to the TRAFAC class translation factor GTPase superfamily. Classic translation factor GTPase family. IF-2 subfamily.

It is found in the cytoplasm. Functionally, one of the essential components for the initiation of protein synthesis. Protects formylmethionyl-tRNA from spontaneous hydrolysis and promotes its binding to the 30S ribosomal subunits. Also involved in the hydrolysis of GTP during the formation of the 70S ribosomal complex. This Neisseria meningitidis serogroup B (strain ATCC BAA-335 / MC58) protein is Translation initiation factor IF-2.